The primary structure comprises 883 residues: NF-X1-type zinc finger protein NFXL2 (883 aa).

Over residues 1-10 (MTNMAGTATT) the composition is skewed to polar residues. The tract at residues 1–44 (MTNMAGTATTEFRWKSPPQPPSQEQPISDSDSDSGSDSENHQHR) is disordered. The segment at 87–152 (CLICLERIKR…EAVWNCPKCR (66 aa)) adopts an RING-type; degenerate zinc-finger fold. 11 consecutive NF-X1-type zinc fingers follow at residues 198 to 216 (CGHC…SCPK), 250 to 269 (CNIH…PCRE), 303 to 322 (CGKH…LCPY), 357 to 377 (CGYH…TCRI), 410 to 429 (CARH…PCSE), 437 to 456 (CRNH…PCPI), 494 to 515 (CRHG…PCRL), 523 to 568 (CGHK…RCPE), 605 to 636 (CGNH…KCDL), 646 to 664 (CQHP…PCKT), and 709 to 738 (CTHL…RCKC). Positions 798–824 (EIEEKEEPSGKNASKRRKRRGRGQDIQ) are disordered. A helical membrane pass occupies residues 841 to 863 (MVVMLVAMLAAVSYYGYKGLLWL).

The protein belongs to the NFX1 family. Interacts with ADO1/ZTL. In terms of tissue distribution, constitutively expressed in mesophyll and guard cells.

It is found in the nucleus. The protein resides in the membrane. The protein operates within protein modification; protein ubiquitination. Functionally, probable transcriptional regulator. May mediate E2- or E3-dependent ubiquitination. Required to gate light sensitivity during the night. Regulates the speed of the clock by acting in the feedback loop between CCA1, LHY and APRR1/TOC1. Promotes the expression of CCA1 at night but not by days. This activational effect is enhanced by interaction with ADO1/ZTL. Association with ADO1/ZTL is not leading to the degradation of NFXL2. Confers sensitivity to osmotic stress such as high salinity. Prevents H(2)O(2) production and abscisic acid accumulation. Part of a regulatory network that integrates the biosynthesis and action of abscisic acid, reactive oxygen species and cuticle components. The chain is NF-X1-type zinc finger protein NFXL2 (NFXL2) from Arabidopsis thaliana (Mouse-ear cress).